A 294-amino-acid chain; its full sequence is Pyridoxal 5'-phosphate synthase subunit PdxS (294 aa).

Asp24 is a D-ribose 5-phosphate binding site. Lys81 acts as the Schiff-base intermediate with D-ribose 5-phosphate in catalysis. Gly153 serves as a coordination point for D-ribose 5-phosphate. Arg165 serves as a coordination point for D-glyceraldehyde 3-phosphate. Residues Gly214 and 235 to 236 (GS) each bind D-ribose 5-phosphate.

Belongs to the PdxS/SNZ family. In terms of assembly, homohexamer and homododecamer. In the presence of PdxT, forms a dodecamer of heterodimers.

It carries out the reaction aldehydo-D-ribose 5-phosphate + D-glyceraldehyde 3-phosphate + L-glutamine = pyridoxal 5'-phosphate + L-glutamate + phosphate + 3 H2O + H(+). Its pathway is cofactor biosynthesis; pyridoxal 5'-phosphate biosynthesis. Catalyzes the formation of pyridoxal 5'-phosphate from ribose 5-phosphate (RBP), glyceraldehyde 3-phosphate (G3P) and ammonia. The ammonia is provided by the PdxT subunit. Can also use ribulose 5-phosphate and dihydroxyacetone phosphate as substrates, resulting from enzyme-catalyzed isomerization of RBP and G3P, respectively. This chain is Pyridoxal 5'-phosphate synthase subunit PdxS, found in Bacillus subtilis (strain 168).